We begin with the raw amino-acid sequence, 576 residues long: Sodium/proton antiporter 1 (576 aa).

Residues 1–60 (MAVFPIGSHFAPPHQLTKRHVIATSSPISISTRLPQNVSFSKVSGVTGSTRLSKHGVLVR) constitute a chloroplast transit peptide. 9 consecutive transmembrane segments (helical) span residues 237–257 (TLLW…DNLT), 279–299 (LGGV…IGDV), 320–340 (FLPS…TSEV), 357–377 (APRG…VPVF), 379–399 (ALTG…LWIL), 426–446 (GALF…AGIL), 462–482 (LIAS…LVAA), 501–521 (LIAF…AAGV), and 541–561 (FAFA…NLHF).

The protein belongs to the NhaD Na(+)/H(+) (TC 2.A.62) antiporter family. Mostly expressed in mature and senescent leaves, and, to a lower extent, in seeds, roots, shoots, flowers and developing siliques.

The protein localises to the plastid. Its subcellular location is the chloroplast membrane. It is found in the chloroplast envelope. In terms of biological role, na(+)/H(+) antiporter that extrudes sodium in exchange for external protons. The protein is Sodium/proton antiporter 1 of Arabidopsis thaliana (Mouse-ear cress).